A 46-amino-acid chain; its full sequence is Defensin-like protein AX1 (46 aa).

4 cysteine pairs are disulfide-bonded: C3–C46, C14–C34, C20–C40, and C24–C42.

As to expression, leaves and flowers.

In terms of biological role, strong inhibiting activity against C.beticola and other filamentous fungi. Little or no effect against bacteria. This is Defensin-like protein AX1 from Beta vulgaris (Sugar beet).